A 660-amino-acid polypeptide reads, in one-letter code: Acetyl-coenzyme A synthetase (660 aa).

CoA-binding positions include 197 to 200 (RGGK) and Thr-317. ATP is bound by residues 397-399 (GEP), 421-426 (DTWWQT), Asp-512, and Arg-528. Ser-536 contacts CoA. Arg-539 serves as a coordination point for ATP. Residues Val-550, His-552, and Val-555 each coordinate Mg(2+). At Lys-625 the chain carries N6-acetyllysine.

The protein belongs to the ATP-dependent AMP-binding enzyme family. Requires Mg(2+) as cofactor. In terms of processing, acetylated. Deacetylation by the SIR2-homolog deacetylase activates the enzyme.

It catalyses the reaction acetate + ATP + CoA = acetyl-CoA + AMP + diphosphate. Functionally, catalyzes the conversion of acetate into acetyl-CoA (AcCoA), an essential intermediate at the junction of anabolic and catabolic pathways. AcsA undergoes a two-step reaction. In the first half reaction, AcsA combines acetate with ATP to form acetyl-adenylate (AcAMP) intermediate. In the second half reaction, it can then transfer the acetyl group from AcAMP to the sulfhydryl group of CoA, forming the product AcCoA. The sequence is that of Acetyl-coenzyme A synthetase from Burkholderia lata (strain ATCC 17760 / DSM 23089 / LMG 22485 / NCIMB 9086 / R18194 / 383).